A 502-amino-acid chain; its full sequence is L-amino-acid oxidase BmooLAAO-I (502 aa).

Positions 1 to 18 (MNVFFTFSLLFLAALGSC) are cleaved as a signal peptide. Residues Cys-28 and Cys-191 are joined by a disulfide bond. FAD contacts are provided by residues 61–62 (MS), 81–82 (EA), Arg-89, and 105–108 (GPMR). Arg-108 serves as a coordination point for substrate. An N-linked (GlcNAc...) asparagine glycan is attached at Asn-190. His-241 contributes to the substrate binding site. Val-279 provides a ligand contact to FAD. A disulfide bridge connects residues Cys-349 and Cys-430. Tyr-390 lines the substrate pocket. Residues Glu-475 and 482–487 (GWIDST) each bind FAD. 482 to 483 (GW) is a substrate binding site.

It belongs to the flavin monoamine oxidase family. FIG1 subfamily. Homodimer; non-covalently linked. Requires FAD as cofactor. N-glycosylated. The enzymatic activity is not affected by deglycosylation. In terms of tissue distribution, expressed by the venom gland.

The protein localises to the secreted. The catalysed reaction is an L-alpha-amino acid + O2 + H2O = a 2-oxocarboxylate + H2O2 + NH4(+). It catalyses the reaction L-leucine + O2 + H2O = 4-methyl-2-oxopentanoate + H2O2 + NH4(+). It carries out the reaction L-phenylalanine + O2 + H2O = 3-phenylpyruvate + H2O2 + NH4(+). The enzyme catalyses L-tryptophan + O2 + H2O = indole-3-pyruvate + H2O2 + NH4(+). The catalysed reaction is L-methionine + O2 + H2O = 4-methylsulfanyl-2-oxobutanoate + H2O2 + NH4(+). It catalyses the reaction L-isoleucine + O2 + H2O = (S)-3-methyl-2-oxopentanoate + H2O2 + NH4(+). It carries out the reaction L-histidine + O2 + H2O = 3-(imidazol-5-yl)pyruvate + H2O2 + NH4(+). The enzyme catalyses L-tyrosine + O2 + H2O = 3-(4-hydroxyphenyl)pyruvate + H2O2 + NH4(+). The catalysed reaction is L-alanine + O2 + H2O = pyruvate + H2O2 + NH4(+). It catalyses the reaction L-valine + O2 + H2O = 3-methyl-2-oxobutanoate + H2O2 + NH4(+). With respect to regulation, its enzymatic activities is reduced when it is exposed to Ca(2+), Zn(2+), Al(3+), Cu(2+) or Ni(2+) salts. Functionally, catalyzes an oxidative deamination of predominantly hydrophobic and aromatic L-amino acids, thus producing hydrogen peroxide that may contribute to the toxicity of the venom. Shows very high activity on L-Met, and L-Leu, high activity on L-Ile, L-Phe and L-Tyr and moderate activity on L-His, L-Val and L-Ala. Exhibits diverse biological activities, such as edema, apoptosis of tumor cell lines, antibacterial activities against both Gram-positive and Gram-negative bacteria, as well as induction of platelet aggregation. Effects of snake L-amino oxidases on platelets are controversial, since they either induce aggregation or inhibit agonist-induced aggregation. These different effects are probably due to different experimental conditions. Unlike other snake venom L-amino acid oxidases, does not induce hemorrhage. It may also induce hemolysis. Has parasiticidal activities against and leishmania, as a result of enzyme-catalyzed hydrogen peroxide production. The protein is L-amino-acid oxidase BmooLAAO-I of Bothrops moojeni (Lance-headed viper).